The chain runs to 431 residues: E3 ubiquitin-protein ligase marc-3 (431 aa).

Residues 5–74 (NASLGPAVCR…EICKFAFKIK (70 aa)) form an RING-CH-type zinc finger. 8 residues coordinate Zn(2+): Cys-13, Cys-16, Cys-38, Cys-40, His-48, Cys-51, Cys-64, and Cys-67. Helical transmembrane passes span 98–118 (PFID…GVFM) and 157–177 (LFLF…VSAL). 2 disordered regions span residues 267–289 (TSPD…FGRR) and 327–349 (SRAT…RDMR). The span at 273-282 (NTHHHDESRN) shows a compositional bias: basic and acidic residues.

It localises to the cell membrane. Its subcellular location is the endosome membrane. It carries out the reaction S-ubiquitinyl-[E2 ubiquitin-conjugating enzyme]-L-cysteine + [acceptor protein]-L-lysine = [E2 ubiquitin-conjugating enzyme]-L-cysteine + N(6)-ubiquitinyl-[acceptor protein]-L-lysine.. It participates in protein modification; protein ubiquitination. Functionally, E3 ubiquitin-protein ligase which positively regulates the fast polyspermy block during fertilization, preventing entry of more than one sperm into the oocyte. After fertilization, required in the zygote for the selective degradation of a subset of maternal membrane proteins including cav-1, chs-1 and rme-2, probably by mediating their K63-linked polyubiquitination. The sequence is that of E3 ubiquitin-protein ligase marc-3 from Caenorhabditis elegans.